The primary structure comprises 247 residues: Phosphoglycerate mutase 1 (247 aa).

Substrate-binding positions include 8–15 (RHGQSEWN) and 21–22 (TG). His9 acts as the Tele-phosphohistidine intermediate in catalysis. At Ser12 the chain carries Phosphoserine. A Glycyl lysine isopeptide (Lys-Gly) (interchain with G-Cter in ubiquitin) cross-link involves residue Lys31. Residue Tyr49 is modified to Phosphotyrosine. Lys57 participates in a covalent cross-link: Glycyl lysine isopeptide (Lys-Gly) (interchain with G-Cter in ubiquitin). Arg60 is a binding site for substrate. Lys71 participates in a covalent cross-link: Glycyl lysine isopeptide (Lys-Gly) (interchain with G-Cter in ubiquitin). The active-site Proton donor/acceptor is Glu87. Substrate-binding positions include 87-90 (ERHY), Lys98, and 114-115 (RR). A phosphoserine mark is found at Ser116, Ser127, and Ser128. Glycyl lysine isopeptide (Lys-Gly) (interchain with G-Cter in ubiquitin) cross-links involve residues Lys139 and Lys175. 183–184 (GN) contributes to the substrate binding site. Phosphoserine is present on Ser185. Lys191 participates in a covalent cross-link: Glycyl lysine isopeptide (Lys-Gly) (interchain with G-Cter in ubiquitin). Position 197 is a phosphoserine (Ser197).

This sequence belongs to the phosphoglycerate mutase family. BPG-dependent PGAM subfamily. In terms of assembly, homotetramer: dimer of dimers.

It localises to the cytoplasm. Its subcellular location is the mitochondrion outer membrane. The protein resides in the mitochondrion intermembrane space. It catalyses the reaction (2R)-2-phosphoglycerate = (2R)-3-phosphoglycerate. The protein operates within carbohydrate degradation; glycolysis; pyruvate from D-glyceraldehyde 3-phosphate: step 3/5. Its activity is regulated as follows. Inhibited by inositol hexakisphosphate and benzene tri-, tetra- and hexacarboxylates. In terms of biological role, interconversion of 3- and 2-phosphoglycerate with 2,3-bisphosphoglycerate as the primer of the reaction. Can also catalyze the reaction of EC 5.4.2.4 (synthase), but with a reduced activity. The sequence is that of Phosphoglycerate mutase 1 (GPM1) from Saccharomyces cerevisiae (strain ATCC 204508 / S288c) (Baker's yeast).